Here is a 206-residue protein sequence, read N- to C-terminus: Thymidylate kinase (206 aa).

10 to 17 (GVDGVGKT) lines the ATP pocket.

The protein belongs to the thymidylate kinase family.

It catalyses the reaction dTMP + ATP = dTDP + ADP. Its function is as follows. Phosphorylation of dTMP to form dTDP in both de novo and salvage pathways of dTTP synthesis. This is Thymidylate kinase from Bifidobacterium longum (strain NCC 2705).